The sequence spans 630 residues: Putative lipase atg15 (630 aa).

Residues 1 to 20 (MKSSQRRIKRHAMRDMSIST) lie on the Cytoplasmic side of the membrane. The chain crosses the membrane as a helical; Signal-anchor for type II membrane protein span at residues 21–40 (LLLSVVLLPSVVSANDHVYF). The Lumenal portion of the chain corresponds to 41–630 (NPPSPGSPFL…WGSDIEHYEI (590 aa)). N-linked (GlcNAc...) asparagine glycosylation is found at asparagine 200, asparagine 222, asparagine 280, and asparagine 304. Serine 320 acts as the Charge relay system in catalysis. Residue asparagine 466 is glycosylated (N-linked (GlcNAc...) asparagine). The segment covering 577-589 (SVTAPPFSTSTSS) has biased composition (polar residues). The tract at residues 577–599 (SVTAPPFSTSTSSDHVRADHSIG) is disordered.

Belongs to the AB hydrolase superfamily. Lipase family. In terms of assembly, binds to both phosphatidylinositol (PI) and phosphatidylinositol 3,5-bisphosphate (PIP2).

Its subcellular location is the endosome. It is found in the multivesicular body membrane. The protein resides in the prevacuolar compartment membrane. The enzyme catalyses a triacylglycerol + H2O = a diacylglycerol + a fatty acid + H(+). Functionally, lipase which is essential for lysis of subvacuolar cytoplasm to vacuole targeted bodies and intravacuolar autophagic bodies. Involved in the lysis of intravacuolar multivesicular body (MVB) vesicles. The intravacuolar membrane disintegration by atg15 is critical to life span extension. In Aspergillus clavatus (strain ATCC 1007 / CBS 513.65 / DSM 816 / NCTC 3887 / NRRL 1 / QM 1276 / 107), this protein is Putative lipase atg15 (atg15).